Here is a 94-residue protein sequence, read N- to C-terminus: Aspartyl/glutamyl-tRNA(Asn/Gln) amidotransferase subunit C (94 aa).

It belongs to the GatC family. In terms of assembly, heterotrimer of A, B and C subunits.

It carries out the reaction L-glutamyl-tRNA(Gln) + L-glutamine + ATP + H2O = L-glutaminyl-tRNA(Gln) + L-glutamate + ADP + phosphate + H(+). The catalysed reaction is L-aspartyl-tRNA(Asn) + L-glutamine + ATP + H2O = L-asparaginyl-tRNA(Asn) + L-glutamate + ADP + phosphate + 2 H(+). Its function is as follows. Allows the formation of correctly charged Asn-tRNA(Asn) or Gln-tRNA(Gln) through the transamidation of misacylated Asp-tRNA(Asn) or Glu-tRNA(Gln) in organisms which lack either or both of asparaginyl-tRNA or glutaminyl-tRNA synthetases. The reaction takes place in the presence of glutamine and ATP through an activated phospho-Asp-tRNA(Asn) or phospho-Glu-tRNA(Gln). This chain is Aspartyl/glutamyl-tRNA(Asn/Gln) amidotransferase subunit C, found in Opitutus terrae (strain DSM 11246 / JCM 15787 / PB90-1).